Consider the following 116-residue polypeptide: Iron-sulfur cluster insertion protein ErpA (116 aa).

Residues cysteine 44, cysteine 108, and cysteine 110 each contribute to the iron-sulfur cluster site.

It belongs to the HesB/IscA family. As to quaternary structure, homodimer. The cofactor is iron-sulfur cluster.

Required for insertion of 4Fe-4S clusters for at least IspG. The chain is Iron-sulfur cluster insertion protein ErpA from Shewanella loihica (strain ATCC BAA-1088 / PV-4).